Consider the following 172-residue polypeptide: HTH-type transcriptional regulator IscR (172 aa).

The HTH rrf2-type domain occupies 2-131 (RLTSKGRYAV…NNITLGELMR (130 aa)). Positions 28–51 (LADISERQGISLSYLEQLFSRLRK) form a DNA-binding region, H-T-H motif. [2Fe-2S] cluster is bound by residues Cys-92, Cys-98, and Cys-104.

[2Fe-2S] cluster serves as cofactor.

Its function is as follows. Regulates the transcription of several operons and genes involved in the biogenesis of Fe-S clusters and Fe-S-containing proteins. The polypeptide is HTH-type transcriptional regulator IscR (Photobacterium profundum (strain SS9)).